A 308-amino-acid chain; its full sequence is Ycf92-like protein (308 aa).

Helical transmembrane passes span 41–61 (FANN…TLIA), 75–95 (LLTL…GLGV), 153–173 (ISTI…TTAP), 192–212 (IPVT…PLVL), and 288–308 (WLAI…GNQI).

It belongs to the ycf92 family.

Its subcellular location is the membrane. This chain is Ycf92-like protein, found in Nostoc sp. (strain PCC 7120 / SAG 25.82 / UTEX 2576).